A 929-amino-acid chain; its full sequence is Chitin synthase 1 (929 aa).

Over residues 1 to 12 (MAYRGAGGPGGG) the composition is skewed to gly residues. Disordered regions lie at residues 1–43 (MAYR…QEDE) and 114–156 (MGGH…GGGL). 2 stretches are compositionally biased toward polar residues: residues 21–33 (QDLNPHSQYSNVQ) and 140–149 (SWVQRQNPNA). N-linked (GlcNAc...) asparagine glycosylation occurs at asparagine 560. 5 helical membrane-spanning segments follow: residues 587–607 (FFFHVQLIYNILNVIFTWFSL), 643–663 (LFNAVLKYIYLAFVILQFILA), 678–698 (SFFVFSVIQAYILVLSGYLVV), 730–750 (VILLALIAIYGIYFIASFMYL), and 758–778 (SFPYYMLLMSTYINILMVYAF). A glycan (N-linked (GlcNAc...) asparagine) is linked at asparagine 801. The next 2 membrane-spanning stretches (helical) occupy residues 857-877 (TMLVVLWLFSNCLLAVAITSD) and 897-917 (FLLFSTAFLSLIRFIGFLWFL).

It belongs to the chitin synthase family. Class III subfamily.

It is found in the cell membrane. It carries out the reaction [(1-&gt;4)-N-acetyl-beta-D-glucosaminyl](n) + UDP-N-acetyl-alpha-D-glucosamine = [(1-&gt;4)-N-acetyl-beta-D-glucosaminyl](n+1) + UDP + H(+). In terms of biological role, polymerizes chitin, a structural polymer of the cell wall and septum, by transferring the sugar moiety of UDP-GlcNAc to the non-reducing end of the growing chitin polymer. CHS1 and CHS3 have compensatory functions in cell wall modifications in responses to stresses. Involved in appressoria formation and required for full virulence. This chain is Chitin synthase 1, found in Pyricularia oryzae (strain 70-15 / ATCC MYA-4617 / FGSC 8958) (Rice blast fungus).